The chain runs to 414 residues: Peptide chain release factor subunit 1 (414 aa).

The protein belongs to the eukaryotic release factor 1 family. As to quaternary structure, heterodimer of two subunits, one of which binds GTP.

It localises to the cytoplasm. Directs the termination of nascent peptide synthesis (translation) in response to the termination codons UAA, UAG and UGA. The chain is Peptide chain release factor subunit 1 (prf1) from Pyrococcus abyssi (strain GE5 / Orsay).